Consider the following 360-residue polypeptide: 3-dehydroquinate synthase (360 aa).

Residues 71–76 (DGEAHK), 105–109 (GVVGD), 129–130 (TT), Lys142, and Lys151 each bind NAD(+). Zn(2+) is bound by residues Glu184, His247, and His264.

The protein belongs to the sugar phosphate cyclases superfamily. Dehydroquinate synthase family. Requires Co(2+) as cofactor. It depends on Zn(2+) as a cofactor. NAD(+) serves as cofactor.

The protein resides in the cytoplasm. It carries out the reaction 7-phospho-2-dehydro-3-deoxy-D-arabino-heptonate = 3-dehydroquinate + phosphate. Its pathway is metabolic intermediate biosynthesis; chorismate biosynthesis; chorismate from D-erythrose 4-phosphate and phosphoenolpyruvate: step 2/7. In terms of biological role, catalyzes the conversion of 3-deoxy-D-arabino-heptulosonate 7-phosphate (DAHP) to dehydroquinate (DHQ). The chain is 3-dehydroquinate synthase from Azoarcus sp. (strain BH72).